A 1940-amino-acid chain; its full sequence is Myosin-3 (1940 aa).

Residues 33-82 enclose the Myosin N-terminal SH3-like domain; that stretch reads DAKTYCFVVDSKEEYAKGKIKSSQDGKVTVETEDNRTLVVKPEDVYAMNP. One can recognise a Myosin motor domain in the interval 86-779; that stretch reads DKIEDMAMLT…LLGTLEEMRD (694 aa). K130 is subject to N6,N6,N6-trimethyllysine. 179–186 contacts ATP; that stretch reads GESGAGKT. 2 actin-binding regions span residues 656-678 and 758-772; these read LNKL…IPNE and KFGH…GLLG. Positions 782–811 constitute an IQ domain; it reads LAKLITRTQAVCRGFLMRVEFQKMMQRRES. Residues 840 to 1933 are a coiled coil; that stretch reads LLKSAETEKE…KTRDFTSSRM (1094 aa). Residues 1260–1289 are disordered; it reads ARGKNEETQRSLSELTTQKSRLQTEAGELS. Residues 1269 to 1282 are compositionally biased toward polar residues; sequence RSLSELTTQKSRLQ.

It belongs to the TRAFAC class myosin-kinesin ATPase superfamily. Myosin family. As to quaternary structure, muscle myosin is a hexameric protein that consists of 2 heavy chain subunits (MHC), 2 alkali light chain subunits (MLC) and 2 regulatory light chain subunits (MLC-2).

The protein resides in the cytoplasm. The protein localises to the myofibril. Muscle contraction. This chain is Myosin-3 (Myh3), found in Rattus norvegicus (Rat).